Reading from the N-terminus, the 423-residue chain is CinA-like protein (423 aa).

Belongs to the CinA family.

This Prochlorococcus marinus (strain SARG / CCMP1375 / SS120) protein is CinA-like protein.